A 399-amino-acid polypeptide reads, in one-letter code: S-adenosylmethionine synthase (399 aa).

Residue H16 participates in ATP binding. D18 provides a ligand contact to Mg(2+). E44 is a binding site for K(+). The L-methionine site is built by E57 and Q100. The tract at residues 100–110 is flexible loop; that stretch reads QSSDIAQGVNE. ATP contacts are provided by residues 177–179, 244–245, D253, 259–260, A276, and K280; these read DAK, RF, and RK. Position 253 (D253) interacts with L-methionine. K284 serves as a coordination point for L-methionine.

Belongs to the AdoMet synthase family. In terms of assembly, homotetramer; dimer of dimers. It depends on Mg(2+) as a cofactor. K(+) is required as a cofactor.

The protein resides in the cytoplasm. The catalysed reaction is L-methionine + ATP + H2O = S-adenosyl-L-methionine + phosphate + diphosphate. It participates in amino-acid biosynthesis; S-adenosyl-L-methionine biosynthesis; S-adenosyl-L-methionine from L-methionine: step 1/1. Functionally, catalyzes the formation of S-adenosylmethionine (AdoMet) from methionine and ATP. The overall synthetic reaction is composed of two sequential steps, AdoMet formation and the subsequent tripolyphosphate hydrolysis which occurs prior to release of AdoMet from the enzyme. In Lactococcus lactis subsp. cremoris (strain MG1363), this protein is S-adenosylmethionine synthase.